We begin with the raw amino-acid sequence, 461 residues long: Nucleobindin-1 (461 aa).

Positions 1–26 are cleaved as a signal peptide; that stretch reads MPPSGPRGTLLLLPLLLLLLLRAVLA. Residues 42 to 51 form an O-glycosylated at one site region; it reads TESPDTGLYY. Residue Ser-86 is modified to Phosphoserine; by FAM20C. Thr-148 carries the phosphothreonine; by FAM20C modification. Positions 150–218 form a coiled coil; it reads EARDLELLIQ…QQRRHREHPK (69 aa). Residues 172 to 218 mediate DNA binding; the sequence is HHEEFKRYEMLKEHERRRYLESLGEEQRKEAERKLEEQQRRHREHPK. Positions 193–210 are enriched in basic and acidic residues; it reads SLGEEQRKEAERKLEEQQ. Residues 193-221 are disordered; sequence SLGEEQRKEAERKLEEQQRRHREHPKVNV. The segment at 228–321 is binds to GNAI2 and GNAI3; the sequence is LKEVWEELDG…VTLEEFLAST (94 aa). EF-hand domains are found at residues 240 to 275 and 292 to 327; these read PNRF…ELEK and ERLR…KEFG. Ca(2+) contacts are provided by Asp-253, Asn-255, Asp-257, Glu-264, Asp-305, Asn-307, Asp-309, and Glu-316. The GBA signature appears at 303–333; the sequence is NVDTNQDRLVTLEEFLASTQRKEFGDTGEGW. A coiled-coil region spans residues 341 to 407; that stretch reads AYTEEELRRF…QRKQQQQQQQ (67 aa). The interval 368–461 is disordered; that stretch reads LSQETEALGR…LPEVEVPQHL (94 aa). Phosphoserine; by FAM20C is present on Ser-369. Over residues 437–461 the composition is skewed to basic and acidic residues; sequence DQKEVDTSEKKLLERLPEVEVPQHL.

The protein belongs to the nucleobindin family. As to quaternary structure, interacts (via GBA motif) with guanine nucleotide-binding protein G(i) alpha subunits GNAI1, GNAI2 and GNAI3 with higher affinity for GNAI1 and GNAI3 than for GNAI2. Preferentially interacts with inactive rather than active GNAI3. Interaction with GNAI3 is inhibited when NUCB1 binds calcium, probably due to a conformational change which renders the GBA motif inaccessible. O-glycosylated. In terms of tissue distribution, expressed both in fetal and adult heart, lung, liver, kidney and brain, and in adult skeletal muscle, placenta and pancreas.

Its subcellular location is the golgi apparatus. It is found in the cis-Golgi network membrane. The protein localises to the cytoplasm. The protein resides in the secreted. Functionally, major calcium-binding protein of the Golgi which may have a role in calcium homeostasis. Acts as a non-receptor guanine nucleotide exchange factor which binds to and activates alpha subunits of guanine nucleotide-binding proteins (G proteins). The polypeptide is Nucleobindin-1 (NUCB1) (Homo sapiens (Human)).